Reading from the N-terminus, the 337-residue chain is Protein EXORDIUM-like 3 (337 aa).

The N-terminal stretch at 1-25 (MHSLPVNLVLTVLTVFLTSPAQVIG) is a signal peptide. N-linked (GlcNAc...) asparagine glycosylation is found at N34, N66, and N119.

Belongs to the EXORDIUM family.

It is found in the secreted. It localises to the extracellular space. Its subcellular location is the apoplast. Functionally, may play a role in a brassinosteroid-dependent regulation of growth and development. This is Protein EXORDIUM-like 3 (EXL3) from Arabidopsis thaliana (Mouse-ear cress).